The sequence spans 963 residues: Glycine dehydrogenase (decarboxylating) (963 aa).

Lys-710 is modified (N6-(pyridoxal phosphate)lysine).

Belongs to the GcvP family. In terms of assembly, the glycine cleavage system is composed of four proteins: P, T, L and H. Pyridoxal 5'-phosphate is required as a cofactor.

It catalyses the reaction N(6)-[(R)-lipoyl]-L-lysyl-[glycine-cleavage complex H protein] + glycine + H(+) = N(6)-[(R)-S(8)-aminomethyldihydrolipoyl]-L-lysyl-[glycine-cleavage complex H protein] + CO2. Functionally, the glycine cleavage system catalyzes the degradation of glycine. The P protein binds the alpha-amino group of glycine through its pyridoxal phosphate cofactor; CO(2) is released and the remaining methylamine moiety is then transferred to the lipoamide cofactor of the H protein. The polypeptide is Glycine dehydrogenase (decarboxylating) (Pseudoalteromonas translucida (strain TAC 125)).